Reading from the N-terminus, the 429-residue chain is 3-oxo-tetronate kinase (429 aa).

ATP-binding positions include serine 268, glycine 366 to threonine 369, and glycine 410.

It belongs to the four-carbon acid sugar kinase family.

The catalysed reaction is 3-dehydro-L-erythronate + ATP = 3-dehydro-4-O-phospho-L-erythronate + ADP + H(+). It carries out the reaction 3-dehydro-D-erythronate + ATP = 3-dehydro-4-O-phospho-D-erythronate + ADP + H(+). Catalyzes the ATP-dependent phosphorylation of 3-oxo-tetronate to 3-oxo-tetronate 4-phosphate. The sequence is that of 3-oxo-tetronate kinase from Pseudomonas savastanoi pv. phaseolicola (strain 1448A / Race 6) (Pseudomonas syringae pv. phaseolicola (strain 1448A / Race 6)).